The sequence spans 142 residues: ATP synthase epsilon chain (142 aa).

It belongs to the ATPase epsilon chain family. In terms of assembly, F-type ATPases have 2 components, CF(1) - the catalytic core - and CF(0) - the membrane proton channel. CF(1) has five subunits: alpha(3), beta(3), gamma(1), delta(1), epsilon(1). CF(0) has three main subunits: a, b and c.

The protein resides in the cell inner membrane. In terms of biological role, produces ATP from ADP in the presence of a proton gradient across the membrane. The protein is ATP synthase epsilon chain of Shewanella putrefaciens (strain CN-32 / ATCC BAA-453).